Reading from the N-terminus, the 758-residue chain is Inhibitor of nuclear factor kappa-B kinase subunit alpha (758 aa).

A Protein kinase domain is found at 15 to 301 (WVMKERLGTG…LNTDSKQPQC (287 aa)). ATP is bound by residues 21–29 (LGTGGFGHV) and lysine 44. The active-site Proton acceptor is aspartate 145. Residues 456–477 (LLRFNTNLTRYKNMMFSFSQQL) are leucine-zipper. Residues 741–746 (QDWSWT) are NEMO-binding.

It belongs to the protein kinase superfamily. Ser/Thr protein kinase family. I-kappa-B kinase subfamily. Directly interacts with ikbkg/nemo.

Its subcellular location is the cytoplasm. The protein localises to the nucleus. It carries out the reaction L-seryl-[I-kappa-B protein] + ATP = O-phospho-L-seryl-[I-kappa-B protein] + ADP + H(+). Its activity is regulated as follows. Activated when phosphorylated and inactivated when dephosphorylated. In terms of biological role, phosphorylates inhibitors of NF-kappa-B thus leading to the dissociation of the inhibitor/NF-kappa-B complex and ultimately the degradation of the inhibitor. Phosphorylates 'Ser-10' of histone H3 at NF-kappa-B-regulated promoters during inflammatory responses triggered by cytokines. The sequence is that of Inhibitor of nuclear factor kappa-B kinase subunit alpha (chuk) from Danio rerio (Zebrafish).